Reading from the N-terminus, the 192-residue chain is Interleukin-18 (192 aa).

A propeptide spanning residues 1-35 (MAAIPVDDCINFVGMKFIDNTLYFVADSDENLETD) is cleaved from the precursor.

It belongs to the IL-1 family. Forms a ternary complex with ligand-binding receptor subunit IL18R1 and signaling receptor subunit IL18RAP at the plasma membrane. Mature IL18 first binds to IL18R1 forming a low affinity binary complex, which then interacts with IL18RAP to form a high affinity ternary complex that signals inside the cell. Interacts with cargo receptor TMED10; the interaction mediates the translocation from the cytoplasm into the ERGIC (endoplasmic reticulum-Golgi intermediate compartment) and thereby secretion. Post-translationally, the pro-IL-18 precursor is processed by CASP1, CASP4 or CASP5 to yield its mature, active form. The pro-IL-18 precursor features autoinhibitory interactions between the propeptide and the post-cleavage-site region, preventing recognition by the IL18R1 receptor. Processing by CASP1, CASP4 or CASP5 induces conformational changes to generate critical receptor-binding sites. The mature form is then secreted and released in the extracellular milieu by passing through the gasdermin-D (GSDMD) pore. In contrast, cleavage by CASP3 inactivates IL18.

The protein localises to the cytoplasm. Its subcellular location is the cytosol. The protein resides in the secreted. Functionally, pro-inflammatory cytokine primarily involved in epithelial barrier repair, polarized T-helper 1 (Th1) cell and natural killer (NK) cell immune responses. Upon binding to IL18R1 and IL18RAP, forms a signaling ternary complex which activates NF-kappa-B, triggering synthesis of inflammatory mediators. Synergizes with IL12/interleukin-12 to induce IFNG synthesis from T-helper 1 (Th1) cells and natural killer (NK) cells. Involved in transduction of inflammation downstream of pyroptosis: its mature form is specifically released in the extracellular milieu by passing through the gasdermin-D (GSDMD) pore. The polypeptide is Interleukin-18 (IL18) (Felis catus (Cat)).